Consider the following 640-residue polypeptide: Fructose-1,6-bisphosphatase class 3 (640 aa).

Belongs to the FBPase class 3 family. Requires Mn(2+) as cofactor.

The catalysed reaction is beta-D-fructose 1,6-bisphosphate + H2O = beta-D-fructose 6-phosphate + phosphate. It functions in the pathway carbohydrate biosynthesis; gluconeogenesis. The chain is Fructose-1,6-bisphosphatase class 3 from Lactococcus lactis subsp. lactis (strain IL1403) (Streptococcus lactis).